A 216-amino-acid polypeptide reads, in one-letter code: Flagellin B3 (216 aa).

Positions 1 to 11 are excised as a propeptide; that stretch reads MLLDYIKSRRG.

This sequence belongs to the archaeal flagellin family.

The protein resides in the archaeal flagellum. Functionally, flagellin is the subunit protein which polymerizes to form the filaments of archaeal flagella. The polypeptide is Flagellin B3 (flaB3) (Methanocaldococcus jannaschii (strain ATCC 43067 / DSM 2661 / JAL-1 / JCM 10045 / NBRC 100440) (Methanococcus jannaschii)).